An 87-amino-acid polypeptide reads, in one-letter code: Small ribosomal subunit protein bS20 (87 aa).

A disordered region spans residues 1–20 (MANSAQARKRARTALKQRAH). Positions 7–19 (ARKRARTALKQRA) are enriched in basic residues.

Belongs to the bacterial ribosomal protein bS20 family.

Functionally, binds directly to 16S ribosomal RNA. In Chromobacterium violaceum (strain ATCC 12472 / DSM 30191 / JCM 1249 / CCUG 213 / NBRC 12614 / NCIMB 9131 / NCTC 9757 / MK), this protein is Small ribosomal subunit protein bS20.